The primary structure comprises 601 residues: Potassium-transporting ATPase potassium-binding subunit (601 aa).

The next 12 helical transmembrane spans lie at 6–26 (IMLL…LGLF), 65–85 (SYAI…YAVQ), 136–156 (ALTG…FALI), 179–199 (LYIL…QGVI), 283–303 (FSNF…CFTF), 313–333 (GWAV…IVMT), 367–387 (FGIS…CGAV), 397–417 (MGGF…GGVG), 419–439 (GLYG…LMIG), 458–478 (SIAI…AVLV), 524–544 (MLAI…LAIA), and 566–586 (LFVA…YVPA).

It belongs to the KdpA family. The system is composed of three essential subunits: KdpA, KdpB and KdpC.

The protein localises to the cell inner membrane. Functionally, part of the high-affinity ATP-driven potassium transport (or Kdp) system, which catalyzes the hydrolysis of ATP coupled with the electrogenic transport of potassium into the cytoplasm. This subunit binds the periplasmic potassium ions and delivers the ions to the membrane domain of KdpB through an intramembrane tunnel. The chain is Potassium-transporting ATPase potassium-binding subunit from Herminiimonas arsenicoxydans.